Consider the following 1293-residue polypeptide: Putative DNA-directed RNA polymerase 008R (1293 aa).

Residues Cys-61, Cys-64, Cys-71, His-74, Cys-99, Cys-102, and Cys-123 each contribute to the Zn(2+) site. A DNA-binding region spans residues 270 to 339 (TNRKPMAGIK…PVMVTPFNVS (70 aa)). Residues 354 to 376 (EMRDGTVHRPSEWRPSHGDHMET) show a composition bias toward basic and acidic residues. The interval 354–390 (EMRDGTVHRPSEWRPSHGDHMETADGSPLGRVTRPSY) is disordered. The Mg(2+) site is built by Asp-474, Asp-476, and Asp-478. An alpha-amanitin binding region spans residues 724-734 (GQQYVGGSRPG). A bridging helix region spans residues 776-788 (PREVFFHAKSGRE).

The protein belongs to the RNA polymerase beta' chain family.

The catalysed reaction is RNA(n) + a ribonucleoside 5'-triphosphate = RNA(n+1) + diphosphate. Component of the DNA-dependent RNA polymerase that catalyzes the transcription of DNA into RNA using the four ribonucleoside triphosphates as substrates. Largest and catalytic component of RNA polymerase II which synthesizes mRNA precursors and many functional non-coding RNAs. Forms the polymerase active center together with the second largest subunit. In Frog virus 3 (isolate Goorha) (FV-3), this protein is Putative DNA-directed RNA polymerase 008R.